Reading from the N-terminus, the 335-residue chain is MWAVLSLLCAGAWLLGPPACGASNLAVSSFEKLHFKSWMVQHQKKYSLEEYHHRLQVFVSNWRKINAHNAGNHTFKLGLNQFSDMSFDEIRHKYLWSEPQNCSATKGNYLRGTGPYPPSMDWRKKGNFVSPVKNQGSCGSCWTFSTTGALESAVAIATGKMLSLAEQQLVDCAQNFNNHGCQGGLPSQAFEYIRYNKGIMGEDTYPYKGQDDHCKFQPDKAIAFVKDVANITMNDEEAMVEAVALYNPVSFAFEVTNDFLMYRKGIYSSTSCHKTPDKVNHAVLAVGYGEENGIPYWIVKNSWGPQWGMNGYFLIERGKNMCGLAACASYPIPLV.

Positions 1-22 (MWAVLSLLCAGAWLLGPPACGA) are cleaved as a signal peptide. The propeptide occupies 23 to 97 (SNLAVSSFEK…DEIRHKYLWS (75 aa)). N-linked (GlcNAc...) asparagine glycans are attached at residues Asn-72 and Asn-101. Disulfide bonds link Cys-102–Cys-327, Cys-138–Cys-181, Cys-172–Cys-214, and Cys-272–Cys-322. Positions 107 to 115 (GNYLRGTGP) are excised as a propeptide. Residue Cys-141 is part of the active site. Residue Asn-230 is glycosylated (N-linked (GlcNAc...) asparagine). Residues His-281 and Asn-301 contribute to the active site.

This sequence belongs to the peptidase C1 family. As to quaternary structure, composed of cathepsin H and mini chain; disulfide-linked. Cathepsin H may be split into heavy and light chain. All chains are held together by disulfide bonds.

It is found in the lysosome. It catalyses the reaction Hydrolysis of proteins, acting as an aminopeptidase (notably, cleaving Arg-|-Xaa bonds) as well as an endopeptidase.. Important for the overall degradation of proteins in lysosomes. This is Pro-cathepsin H (CTSH) from Sus scrofa (Pig).